Consider the following 583-residue polypeptide: Cationic amino acid transporter 6, chloroplastic (583 aa).

The N-terminal 50 residues, 1–50, are a transit peptide targeting the chloroplast; it reads MEVQSSSNNGGHSSFSSLRVYLNSLSATPSRLSRRAISVSTSSDEMSRVR. 14 helical membrane-spanning segments follow: residues 63–83, 91–111, 132–152, 186–206, 216–236, 255–275, 294–314, 347–367, 397–417, 418–438, 450–470, 481–501, 509–529, and 541–561; these read WYDL…FVTT, AGPS…LSAF, ITFG…DYVM, GFNE…VIIC, NMIM…MGFI, FFPF…LSYI, IPVG…LMAV, VVGI…MLGQ, ASTF…LNVL, LNLV…ALIF, WPTL…TLIW, FMLG…QCVV, LWGV…NIFL, and FGFF…HASS.

Belongs to the amino acid-polyamine-organocation (APC) superfamily. Cationic amino acid transporter (CAT) (TC 2.A.3.3) family. Expressed in roots, stems, flowers, and leaves.

The protein localises to the plastid. It is found in the chloroplast membrane. In terms of biological role, permease involved in the transport of the cationic neutral or acidic amino acids. This is Cationic amino acid transporter 6, chloroplastic (CAT6) from Arabidopsis thaliana (Mouse-ear cress).